The chain runs to 161 residues: Nucleotide-binding protein XAC3671 (161 aa).

Belongs to the YajQ family.

Nucleotide-binding protein. This is Nucleotide-binding protein XAC3671 from Xanthomonas axonopodis pv. citri (strain 306).